We begin with the raw amino-acid sequence, 154 residues long: Probable transport accessory protein MmpS4 (154 aa).

The next 2 membrane-spanning stretches (helical) occupy residues 19 to 39 and 97 to 117; these read IWIP…VYRV and QLPW…NLVA.

It belongs to the MmpS family.

It is found in the cell membrane. This chain is Probable transport accessory protein MmpS4, found in Mycobacterium leprae (strain TN).